Consider the following 215-residue polypeptide: Small ribosomal subunit protein eS1 (215 aa).

This sequence belongs to the eukaryotic ribosomal protein eS1 family.

The protein is Small ribosomal subunit protein eS1 of Thermoplasma volcanium (strain ATCC 51530 / DSM 4299 / JCM 9571 / NBRC 15438 / GSS1).